The chain runs to 451 residues: UDP-N-acetylmuramate--L-alanine ligase (451 aa).

110 to 116 (GTHGKTT) provides a ligand contact to ATP.

Belongs to the MurCDEF family.

It is found in the cytoplasm. It carries out the reaction UDP-N-acetyl-alpha-D-muramate + L-alanine + ATP = UDP-N-acetyl-alpha-D-muramoyl-L-alanine + ADP + phosphate + H(+). Its pathway is cell wall biogenesis; peptidoglycan biosynthesis. In terms of biological role, cell wall formation. The protein is UDP-N-acetylmuramate--L-alanine ligase of Francisella tularensis subsp. holarctica (strain FTNF002-00 / FTA).